Here is a 221-residue protein sequence, read N- to C-terminus: N-(5'-phosphoribosyl)anthranilate isomerase (221 aa).

Belongs to the TrpF family.

The catalysed reaction is N-(5-phospho-beta-D-ribosyl)anthranilate = 1-(2-carboxyphenylamino)-1-deoxy-D-ribulose 5-phosphate. It functions in the pathway amino-acid biosynthesis; L-tryptophan biosynthesis; L-tryptophan from chorismate: step 3/5. The sequence is that of N-(5'-phosphoribosyl)anthranilate isomerase from Chlorobaculum parvum (strain DSM 263 / NCIMB 8327) (Chlorobium vibrioforme subsp. thiosulfatophilum).